The primary structure comprises 107 residues: U20-lycotoxin-Ls1b (107 aa).

The signal sequence occupies residues 1-30 (MFSTSDQVSKMNSRILSALLILGIATCVIA). Residues 31–76 (GGFCPKSRHPQCNLSYKINDCCAQSDCRVGSVCCVEGCGNVCRAES) form the WAP domain. 5 disulfide bridges follow: C34-C64, C42-C68, C51-C63, C52-C90, and C57-C72.

This sequence belongs to the venom protein 11 family. 02 (wap-2) subfamily. Contains 5 disulfide bonds. As to expression, expressed by the venom gland.

It is found in the secreted. In terms of biological role, has antibacterial activity. This Lycosa singoriensis (Wolf spider) protein is U20-lycotoxin-Ls1b.